Consider the following 262-residue polypeptide: Large ribosomal subunit protein uL5c (262 aa).

The transit peptide at 1-39 (MASPSLLQSSASSFHGRFSPLAAPSSARMLSPPLRNVVK) directs the protein to the chloroplast.

This sequence belongs to the universal ribosomal protein uL5 family. Part of the 50S ribosomal subunit; contacts the 5S rRNA.

It is found in the plastid. The protein localises to the chloroplast. Functionally, binds 5S rRNA, forms part of the central protuberance of the 50S subunit. This is Large ribosomal subunit protein uL5c (RPL5) from Arabidopsis thaliana (Mouse-ear cress).